A 369-amino-acid chain; its full sequence is Protein-glutamate methylesterase/protein-glutamine glutaminase (369 aa).

Positions 4 to 121 constitute a Response regulatory domain; it reads KVLVVDDSSF…ARNRDEAVSL (118 aa). Aspartate 55 bears the 4-aspartylphosphate mark. Positions 146 to 171 are enriched in low complexity; sequence ATSSARPLASRTAAPAASAPARPATT. A disordered region spans residues 146-175; it reads ATSSARPLASRTAAPAASAPARPATTKFRA. The CheB-type methylesterase domain maps to 176-369; it reads SGKKYQLTAI…ERMLVEVGLA (194 aa). Catalysis depends on residues serine 188, histidine 215, and aspartate 311.

It belongs to the CheB family. Phosphorylated by CheA. Phosphorylation of the N-terminal regulatory domain activates the methylesterase activity.

The protein resides in the cytoplasm. It catalyses the reaction [protein]-L-glutamate 5-O-methyl ester + H2O = L-glutamyl-[protein] + methanol + H(+). The enzyme catalyses L-glutaminyl-[protein] + H2O = L-glutamyl-[protein] + NH4(+). In terms of biological role, involved in chemotaxis. Part of a chemotaxis signal transduction system that modulates chemotaxis in response to various stimuli. Catalyzes the demethylation of specific methylglutamate residues introduced into the chemoreceptors (methyl-accepting chemotaxis proteins or MCP) by CheR. Also mediates the irreversible deamidation of specific glutamine residues to glutamic acid. The protein is Protein-glutamate methylesterase/protein-glutamine glutaminase of Vibrio parahaemolyticus serotype O3:K6 (strain RIMD 2210633).